Here is a 665-residue protein sequence, read N- to C-terminus: Prelamin-A/C (665 aa).

The residue at position 1 (Met-1) is an N-acetylmethionine. The disordered stretch occupies residues Met-1 to Thr-27. The head stretch occupies residues Met-1 to Glu-33. Positions Met-1 to Ala-130 are interaction with MLIP. At Thr-3 the chain carries Phosphothreonine. Ser-5 carries the phosphoserine modification. A Phosphothreonine modification is found at Thr-10. Phosphoserine is present on residues Ser-12 and Ser-18. Thr-19 carries the phosphothreonine modification. Ser-22 is subject to Phosphoserine. One can recognise an IF rod domain in the interval Glu-31 to Leu-387. The residue at position 32 (Lys-32) is an N6-acetyllysine; alternate. Lys-32 carries the post-translational modification N6-succinyllysine; alternate. Lys-32 is covalently cross-linked (Glycyl lysine isopeptide (Lys-Gly) (interchain with G-Cter in SUMO2); alternate). Positions Asp-34–Val-70 are coil 1A. A phosphoserine mark is found at Ser-51, Ser-66, and Ser-71. Residues Ser-71–Ala-80 form a linker 1 region. N6-acetyllysine occurs at positions 78 and 97. The tract at residues Tyr-81 to Thr-218 is coil 1B. Residue Lys-97 forms a Glycyl lysine isopeptide (Lys-Gly) (interchain with G-Cter in SUMO2) linkage. Ser-107 carries the post-translational modification Phosphoserine. N6-acetyllysine is present on residues Lys-108, Lys-114, Lys-123, Lys-135, Lys-144, and Lys-155. Lys-171 is modified (N6-acetyllysine; alternate). At Lys-171 the chain carries N6-succinyllysine; alternate. Lys-171 is covalently cross-linked (Glycyl lysine isopeptide (Lys-Gly) (interchain with G-Cter in SUMO2); alternate). An N6-acetyllysine mark is found at Lys-180, Lys-201, and Lys-208. A Glycyl lysine isopeptide (Lys-Gly) (interchain with G-Cter in SUMO2); alternate cross-link involves residue Lys-201. Lys-201 is covalently cross-linked (Glycyl lysine isopeptide (Lys-Gly) (interchain with G-Cter in SUMO); alternate). Lys-208 is covalently cross-linked (Glycyl lysine isopeptide (Lys-Gly) (interchain with G-Cter in SUMO2)). Ser-212 carries the phosphoserine modification. Glycyl lysine isopeptide (Lys-Gly) (interchain with G-Cter in SUMO2) cross-links involve residues Lys-219 and Lys-233. Positions Lys-219 to Ala-242 are linker 2. 4 positions are modified to N6-acetyllysine: Lys-233, Lys-260, Lys-265, and Lys-270. The segment at Asp-243–Glu-383 is coil 2. Lys-260 is covalently cross-linked (Glycyl lysine isopeptide (Lys-Gly) (interchain with G-Cter in SUMO2); alternate). A Glycyl lysine isopeptide (Lys-Gly) (interchain with G-Cter in SUMO2); alternate cross-link involves residue Lys-270. A phosphoserine mark is found at Ser-277, Ser-282, Ser-301, and Ser-307. Residue Lys-311 forms a Glycyl lysine isopeptide (Lys-Gly) (interchain with G-Cter in SUMO2); alternate linkage. Residues Lys-311, Lys-316, and Lys-341 each carry the N6-acetyllysine modification. Glycyl lysine isopeptide (Lys-Gly) (interchain with G-Cter in SUMO2) cross-links involve residues Lys-366 and Lys-378. The tract at residues Glu-384–Val-442 is disordered. The segment at Glu-384–Met-665 is tail. 10 positions are modified to phosphoserine: Ser-390, Ser-392, Ser-395, Ser-398, Ser-403, Ser-404, Ser-406, Ser-407, Ser-409, and Ser-414. Residues Ser-395–Ser-409 are compositionally biased toward low complexity. At Thr-416 the chain carries Phosphothreonine. Lys-417 is modified (N6-acetyllysine). Residues Lys-417 and Lys-420 each participate in a glycyl lysine isopeptide (Lys-Gly) (interchain with G-Cter in SUMO2) cross-link. Positions Lys-417–Glu-422 match the Nuclear localization signal motif. Residues Ser-423, Ser-426, Ser-429, and Ser-431 each carry the phosphoserine modification. One can recognise an LTD domain in the interval Ser-428–Arg-545. A Glycyl lysine isopeptide (Lys-Gly) (interchain with G-Cter in SUMO2); alternate cross-link involves residue Lys-450. 2 positions are modified to N6-acetyllysine: Lys-450 and Lys-457. A phosphoserine mark is found at Ser-458 and Ser-463. Glycyl lysine isopeptide (Lys-Gly) (interchain with G-Cter in SUMO2) cross-links involve residues Lys-470 and Lys-486. Lys-486 is modified (N6-acetyllysine). Phosphothreonine is present on Thr-496. Ser-500 is modified (phosphoserine). Phosphothreonine occurs at positions 505 and 510. At Ser-546 the chain carries Phosphoserine. A Phosphothreonine modification is found at Thr-548. The segment covering Asp-552–Asp-561 has biased composition (acidic residues). Residues Asp-552 to Asp-577 are disordered. Ser-570 and Ser-573 each carry phosphoserine. Lys-599 is covalently cross-linked (Glycyl lysine isopeptide (Lys-Gly) (interchain with G-Cter in SUMO2); alternate). Lys-599 is covalently cross-linked (Glycyl lysine isopeptide (Lys-Gly) (interchain with G-Cter in SUMO1); alternate). A phosphoserine mark is found at Ser-613, Ser-614, Ser-617, and Ser-620. Ser-626 and Ser-629 each carry an O-linked (GlcNAc) serine glycan. Ser-629, Ser-633, Ser-637, and Ser-653 each carry phosphoserine. A propeptide spans Leu-648–Cys-662 (removed in Lamin-A/C form). The residue at position 662 (Cys-662) is a Cysteine methyl ester. A lipid anchor (S-farnesyl cysteine) is attached at Cys-662. Positions Ser-663–Met-665 are cleaved as a propeptide — removed in Prelamin-A/C form and in Lamin-A/C form.

Belongs to the intermediate filament family. As to quaternary structure, homodimer of lamin A and lamin C. Lamin dimers then assemble into dimeric head-to-tail polymers. Ultimately, two head-to-tail polymers assemble laterally into a protofilament with a uniformly shaped rod of 3.5 nm in diameter. Interacts with lamin-associated polypeptides IA, IB and TMPO-alpha, RB1 and with emerin. Interacts with SREBF1, SREBF2, SUN2 and TMEM43. Interacts with TMEM201. Proteolytically processed isoform A interacts with NARF. Interacts with SUN1. Interacts with MLIP. Interacts with DMPK; may regulate nuclear envelope stability. Interacts with SUV39H1; the interaction increases stability of SUV39H1. Interacts with SYNE2. Interacts with ITSN1 isoform 2. Interacts with IFFO1; enables the formation of an interior nucleoskeleton that is recruited to DNA double-strand breaks. In terms of assembly, interacts with EMD. Interacts (via C-terminus) with LEMD2 (via N-terminus) (in vitro). Post-translationally, proteolytic cleavage of the C-terminal of 18 residues of prelamin-A/C results in the production of lamin-A/C. The prelamin-A/C maturation pathway includes farnesylation of CAAX motif by protein farnesyltransferase (FNTA and FNTB), removal of the last three amino acids (-AAX) by RCE1/FACE2 and/or ZMPSTE24, methylation of the C-terminal cysteine by ICMT and endoproteolytic removal of the last 15 C-terminal amino acids by ZMPSTE24. Proteolytic cleavage requires prior farnesylation and methylation, and absence of these blocks cleavage. Farnesylation of prelamin-A/C facilitates nuclear envelope targeting. In terms of processing, phosphorylation plays a key role in lamin organization, subcellular localization and nuclear envelope disintegration. Phosphorylation by CDK1 at Ser-22 and Ser-392 at the onset of mitosis drives lamin disassembly and nuclear envelope breakdown. Phosphorylation at Ser-22 and Ser-392 during interphase promotes localization to the nucleoplasm and regulates lamina assembly. Phosphorylation at Ser-22, Ser-392 and Ser-629 during interphase causes redistribution between the nucleus and the cytoplasm. Phosphorylation at Ser-22 by CDK1 regulates matrix stiffness. Phosphorylation status of Ser-22 determines its localization between double-strand break (DSB) sites and the nuclear matrix. Phosphorylated by ATR at Ser-282 in response to DNA damage, leading to lamin disassembly and nuclear envelope rupture. Phosphorylation also regulates stability in micronuclei arising from genome instability: phosphorylation at Ser-395 by ATR in response to genome instability and double-stranded DNA breaks primes LMNA for subsequent phosphorylation at Ser-392 by CDK1 and micronuclei envelope rupture. The rupture of micronuclear envelope triggers the cGAS-STING pathway thereby activating the type I interferon response and innate immunity. Post-translationally, acetylation by KAT8 is required for nuclear architecture. Sumoylation is necessary for the localization to the nuclear envelope.

The protein localises to the nucleus lamina. Its subcellular location is the nucleus envelope. It localises to the nucleus. The protein resides in the nucleoplasm. It is found in the nucleus matrix. Lamins are intermediate filament proteins that assemble into a filamentous meshwork, and which constitute the major components of the nuclear lamina, a fibrous layer on the nucleoplasmic side of the inner nuclear membrane. Lamins provide a framework for the nuclear envelope, bridging the nuclear envelope and chromatin, thereby playing an important role in nuclear assembly, chromatin organization, nuclear membrane and telomere dynamics. Lamin A and C also regulate matrix stiffness by conferring nuclear mechanical properties. The structural integrity of the lamina is strictly controlled by the cell cycle, as seen by the disintegration and formation of the nuclear envelope in prophase and telophase, respectively. Lamin A and C are present in equal amounts in the lamina of mammals. Also invoved in DNA repair: recruited by DNA repair proteins XRCC4 and IFFO1 to the DNA double-strand breaks (DSBs) to prevent chromosome translocation by immobilizing broken DNA ends. Required for normal development of peripheral nervous system and skeletal muscle and for muscle satellite cell proliferation. Required for osteoblastogenesis and bone formation. Also prevents fat infiltration of muscle and bone marrow, helping to maintain the volume and strength of skeletal muscle and bone. Required for cardiac homeostasis. In terms of biological role, prelamin-A/C can accelerate smooth muscle cell senescence. It acts to disrupt mitosis and induce DNA damage in vascular smooth muscle cells (VSMCs), leading to mitotic failure, genomic instability, and premature senescence. This is Prelamin-A/C (Lmna) from Rattus norvegicus (Rat).